Here is a 348-residue protein sequence, read N- to C-terminus: Phosphoribosylformylglycinamidine cyclo-ligase (348 aa).

It belongs to the AIR synthase family.

The protein localises to the cytoplasm. The enzyme catalyses 2-formamido-N(1)-(5-O-phospho-beta-D-ribosyl)acetamidine + ATP = 5-amino-1-(5-phospho-beta-D-ribosyl)imidazole + ADP + phosphate + H(+). It participates in purine metabolism; IMP biosynthesis via de novo pathway; 5-amino-1-(5-phospho-D-ribosyl)imidazole from N(2)-formyl-N(1)-(5-phospho-D-ribosyl)glycinamide: step 2/2. This is Phosphoribosylformylglycinamidine cyclo-ligase from Geobacter metallireducens (strain ATCC 53774 / DSM 7210 / GS-15).